Reading from the N-terminus, the 381-residue chain is Neuropeptide Y receptor type 2 (381 aa).

Positions 1 to 35 (MGPIGAEADENQTVEEMKVEQYGPQTTPRGELVPD) are disordered. Residues 1–51 (MGPIGAEADENQTVEEMKVEQYGPQTTPRGELVPDPEPELIDSTKLIEVQV) are Extracellular-facing. A glycan (N-linked (GlcNAc...) asparagine) is linked at Asn-11. Residues 52–72 (VLILAYCSIILLGVIGNSLVI) form a helical membrane-spanning segment. Residues 73-86 (HVVIKFKSMRTVTN) are Cytoplasmic-facing. A helical membrane pass occupies residues 87 to 107 (FFIANLAVADLLVNTLCLPFT). Topologically, residues 108–124 (LTYTLMGEWKMGPVLCH) are extracellular. The cysteines at positions 123 and 203 are disulfide-linked. Residues 125-145 (LVPYAQGLAVQVSTITLTVIA) traverse the membrane as a helical segment. Residues 146 to 165 (LDRHRCIVYHLESKISKRIS) lie on the Cytoplasmic side of the membrane. Residues 166–186 (FLIIGLAWGISALLASPLAIF) form a helical membrane-spanning segment. The Extracellular segment spans residues 187–216 (REYSLIEIIPDFEIVACTEKWPGEEKSIYG). The chain crosses the membrane as a helical span at residues 217-237 (TVYSLSSLLILYVLPLGIISF). The Cytoplasmic segment spans residues 238-268 (SYTRIWSKLKNHVSPGAANDHYHQRRQKTTK). A helical membrane pass occupies residues 269-289 (MLVCVVVVFAVSWLPLHAFQL). Residues 290–304 (AVDIDSQVLDLKEYK) are Extracellular-facing. The chain crosses the membrane as a helical span at residues 305–325 (LIFTVFHIIAMCSTFANPLLY). Residues 326-381 (GWMNSNYRKAFLSAFRCEQRLDAIHSEVSVTFKAKKNLEVRKNSGPNDSFTEATNV) are Cytoplasmic-facing. The S-palmitoyl cysteine moiety is linked to residue Cys-342.

Belongs to the G-protein coupled receptor 1 family. In terms of tissue distribution, high levels in amygdala, corpus callosum, hippocampus and subthalamic nucleus. Also detectable in caudate nucleus, hypothalamus and substantia nigra.

It localises to the cell membrane. Receptor for neuropeptide Y and peptide YY. The rank order of affinity of this receptor for pancreatic polypeptides is PYY &gt; NPY &gt; PYY (3-36) &gt; NPY (2-36) &gt; [Ile-31, Gln-34] PP &gt; [Leu-31, Pro-34] NPY &gt; PP, [Pro-34] PYY and NPY free acid. This Homo sapiens (Human) protein is Neuropeptide Y receptor type 2 (NPY2R).